The sequence spans 495 residues: Neuronal acetylcholine receptor subunit beta-4 (495 aa).

The N-terminal stretch at methionine 1–cysteine 20 is a signal peptide. The Extracellular segment spans residues arginine 21–threonine 235. Residues asparagine 35, asparagine 92, asparagine 137, and asparagine 165 are each glycosylated (N-linked (GlcNAc...) asparagine). Cysteine 152 and cysteine 166 are disulfide-bonded. A helical transmembrane segment spans residues isoleucine 236–proline 256. Over serine 257–threonine 264 the chain is Cytoplasmic. Glutamate 261 lines the Na(+) pocket. A helical transmembrane segment spans residues leucine 265–proline 285. At proline 286–tyrosine 297 the chain is on the extracellular side. The helical transmembrane segment at leucine 298–valine 318 threads the bilayer. At histidine 319–arginine 463 the chain is on the cytoplasmic side. The chain crosses the membrane as a helical span at residues leucine 464–proline 484. Residues leucine 485–leucine 495 lie on the Extracellular side of the membrane.

Belongs to the ligand-gated ion channel (TC 1.A.9) family. Acetylcholine receptor (TC 1.A.9.1) subfamily. Beta-4/CHRNB4 sub-subfamily. As to quaternary structure, neuronal AChR is composed of two different types of subunits: alpha and beta. CHRNB4/Beta-4 subunit can be combined to CHRNA2/alpha-2, CHRNA3/alpha-3 or CHRNA4/alpha-4, CHRNA5/alpha-5 and CHRNB3/beta-3 to give rise to functional receptors. Forms stoichiometries such as (CHRNA3)2:(CHRNB4)3 or (CHRNA3:CHRNB4)2:CHRNB3. Interacts with RIC3; which is required for proper folding and assembly. Interacts with LYPD6. Predominantly expressed by immature T-cells in the thymus.

Its subcellular location is the synaptic cell membrane. It is found in the cell membrane. The catalysed reaction is K(+)(in) = K(+)(out). It catalyses the reaction Na(+)(in) = Na(+)(out). It carries out the reaction Ca(2+)(in) = Ca(2+)(out). Activated by a myriad of ligands such as acetylcholine, cytisine, nicotine, choline and epibatidine. The heteropentamer CHRNA3:CHRNB4 activity is blocked by the alpha-conotoxin ImI and AuIB. In terms of biological role, component of neuronal acetylcholine receptors (nAChRs) that function as pentameric, ligand-gated cation channels with high calcium permeability among other activities. nAChRs are excitatory neurotrasnmitter receptors formed by a collection of nAChR subunits known to mediate synaptic transmission in the nervous system and the neuromuscular junction. Each nAchR subunit confers differential attributes to channel properties, including activation, deactivation and desensitization kinetics, pH sensitivity, cation permeability, and binding to allosteric modulators. CHRNB4 forms heteropentameric neuronal acetylcholine receptors with CHRNA2, CHRNA3 and CHRNA4, as well as CHRNA5 and CHRNB3 as accesory subunits. CHRNA3:CHRNB4 being predominant in neurons of the autonomic ganglia, it is known as ganglionic nicotinic receptor. CHRNA3:CHRNB4 or CHRNA3:CHRNA5:CHRNB4 play also an important role in the habenulo-interpeduncular tract, modulating the mesolimbic dopamine system and affecting reward circuits and addiction. Hypothalamic CHRNA3:CHRNB4 nAChR activation by nicotine leads to activation of POMC neurons and a decrease in food intake. The protein is Neuronal acetylcholine receptor subunit beta-4 (Chrnb4) of Mus musculus (Mouse).